The following is a 120-amino-acid chain: NAD(P)H-quinone oxidoreductase subunit 3, chloroplastic (120 aa).

A run of 3 helical transmembrane segments spans residues 9-29, 64-84, and 88-108; these read IFWA…LISG, MFAL…PWAM, and VLGV…IVGS.

It belongs to the complex I subunit 3 family. In terms of assembly, NDH is composed of at least 16 different subunits, 5 of which are encoded in the nucleus.

It localises to the plastid. The protein resides in the chloroplast thylakoid membrane. It catalyses the reaction a plastoquinone + NADH + (n+1) H(+)(in) = a plastoquinol + NAD(+) + n H(+)(out). The enzyme catalyses a plastoquinone + NADPH + (n+1) H(+)(in) = a plastoquinol + NADP(+) + n H(+)(out). Functionally, NDH shuttles electrons from NAD(P)H:plastoquinone, via FMN and iron-sulfur (Fe-S) centers, to quinones in the photosynthetic chain and possibly in a chloroplast respiratory chain. The immediate electron acceptor for the enzyme in this species is believed to be plastoquinone. Couples the redox reaction to proton translocation, and thus conserves the redox energy in a proton gradient. This is NAD(P)H-quinone oxidoreductase subunit 3, chloroplastic from Amborella trichopoda.